The primary structure comprises 263 residues: 4-hydroxy-2-oxo-heptane-1,7-dioate aldolase (263 aa).

His45 functions as the Proton acceptor in the catalytic mechanism. Residue Gln147 coordinates substrate. Glu149 serves as a coordination point for a divalent metal cation. Substrate-binding residues include Ala174 and Asp175. Asp175 provides a ligand contact to a divalent metal cation.

Belongs to the HpcH/HpaI aldolase family. In terms of assembly, homohexamer; trimer of dimers. The cofactor is a divalent metal cation.

It catalyses the reaction 4-hydroxy-2-oxoheptanedioate = succinate semialdehyde + pyruvate. It functions in the pathway aromatic compound metabolism; 4-hydroxyphenylacetate degradation; pyruvate and succinate semialdehyde from 4-hydroxyphenylacetate: step 7/7. Its function is as follows. Catalyzes the reversible retro-aldol cleavage of 4-hydroxy-2-ketoheptane-1,7-dioate (HKHD) to pyruvate and succinic semialdehyde. The chain is 4-hydroxy-2-oxo-heptane-1,7-dioate aldolase from Salmonella newport (strain SL254).